Here is a 928-residue protein sequence, read N- to C-terminus: Protein ARABIDILLO 2 (928 aa).

The short motif at 3–8 is the Nuclear localization signal element; sequence RRVRQR. The 47-residue stretch at 37 to 83 folds into the F-box domain; that stretch reads YVNWTSLPYDTVFHLFTRLNYRDRASLASTCRTWRSLGASSFLWSSL. ARM repeat units follow at residues 147-186, 237-278, 303-341, 370-409, 419-458, 460-499, 501-543, 545-585, 591-630, 632-674, 676-715, 717-757, and 824-864; these read AARH…KLRV, TSNI…KSSQ, KGKV…DLIR, SQGL…TFIV, CGRA…NLSV, AKVA…NLSV, EEHK…NLAA, DKCS…NLAA, GNNA…NLAF, DKNR…GLSV, EANS…NLSF, PGNA…YMFD, and IPEA…QFTI.

Belongs to the beta-catenin family. As to expression, expressed ubiquitously.

It is found in the nucleus. Its function is as follows. Promotes lateral root initiation and development, independently of auxin (IAA) and abscisis acid (ABA). The polypeptide is Protein ARABIDILLO 2 (Arabidopsis thaliana (Mouse-ear cress)).